The sequence spans 231 residues: MKVGIIGAMQQEVAILKEAMTNAQTVNKAGCTFYSGQINGVEVVLLQSGIGKVAAAIGTTILLDEYQPDMVLNTGSAGGFDSSLNLGDVVISTEVRHHDADVTAFGYEMGQMAGQPAAFLADEKLMNLAEKALEQMDGQHAVRGLICTGDAFVCTAERQAFIRQHFPSVIAVEMEASAIAQTCYQFKVPFVVVRAISDVADKESPMSFEEFLPLAAKSSSEMVFKMLELLK.

Glu12 (proton acceptor) is an active-site residue. Substrate-binding positions include Gly78, Val153, and 174-175 (ME). Catalysis depends on Asp198, which acts as the Proton donor.

This sequence belongs to the PNP/UDP phosphorylase family. MtnN subfamily.

It carries out the reaction S-adenosyl-L-homocysteine + H2O = S-(5-deoxy-D-ribos-5-yl)-L-homocysteine + adenine. The catalysed reaction is S-methyl-5'-thioadenosine + H2O = 5-(methylsulfanyl)-D-ribose + adenine. The enzyme catalyses 5'-deoxyadenosine + H2O = 5-deoxy-D-ribose + adenine. Its pathway is amino-acid biosynthesis; L-methionine biosynthesis via salvage pathway; S-methyl-5-thio-alpha-D-ribose 1-phosphate from S-methyl-5'-thioadenosine (hydrolase route): step 1/2. Its function is as follows. Catalyzes the irreversible cleavage of the glycosidic bond in both 5'-methylthioadenosine (MTA) and S-adenosylhomocysteine (SAH/AdoHcy) to adenine and the corresponding thioribose, 5'-methylthioribose and S-ribosylhomocysteine, respectively. Also cleaves 5'-deoxyadenosine, a toxic by-product of radical S-adenosylmethionine (SAM) enzymes, into 5-deoxyribose and adenine. This Vibrio vulnificus (strain CMCP6) protein is 5'-methylthioadenosine/S-adenosylhomocysteine nucleosidase.